We begin with the raw amino-acid sequence, 161 residues long: SsrA-binding protein (161 aa).

A disordered region spans residues 1–23 (MATKKNEQIKGRTDGLVAENRRS).

This sequence belongs to the SmpB family.

Its subcellular location is the cytoplasm. Its function is as follows. Required for rescue of stalled ribosomes mediated by trans-translation. Binds to transfer-messenger RNA (tmRNA), required for stable association of tmRNA with ribosomes. tmRNA and SmpB together mimic tRNA shape, replacing the anticodon stem-loop with SmpB. tmRNA is encoded by the ssrA gene; the 2 termini fold to resemble tRNA(Ala) and it encodes a 'tag peptide', a short internal open reading frame. During trans-translation Ala-aminoacylated tmRNA acts like a tRNA, entering the A-site of stalled ribosomes, displacing the stalled mRNA. The ribosome then switches to translate the ORF on the tmRNA; the nascent peptide is terminated with the 'tag peptide' encoded by the tmRNA and targeted for degradation. The ribosome is freed to recommence translation, which seems to be the essential function of trans-translation. The chain is SsrA-binding protein from Hyphomonas neptunium (strain ATCC 15444).